A 534-amino-acid polypeptide reads, in one-letter code: Lariat debranching enzyme (534 aa).

4 residues coordinate a divalent metal cation: Cys-8, His-10, Asp-39, and Asn-84. The tract at residues 124-154 is lariat recognition loop; that stretch reads SGIFKGHDFLRGHHEFPPYTDSTCRSVYHVR. The a divalent metal cation site is built by His-174, His-226, and His-228. Disordered stretches follow at residues 242–275 and 501–534; these read KLGD…PPPS and TETP…AQED.

This sequence belongs to the lariat debranching enzyme family. Fe(2+) is required as a cofactor. The cofactor is Zn(2+). Mn(2+) serves as cofactor.

Its subcellular location is the nucleus. With respect to regulation, active in presence of diverse metals including Fe(2+), Zn(2+), Mn(2+). Binds two metal cations in two adjacent alpha and beta metal-binding pockets. In terms of biological role, cleaves the 2'-5' phosphodiester linkage at the branch point of lariat intron pre-mRNAs after splicing and converts them into linear molecules that are subsequently degraded. It thereby facilitates ribonucleotide turnover. In Drosophila melanogaster (Fruit fly), this protein is Lariat debranching enzyme (ldbr).